Consider the following 371-residue polypeptide: Mannonate dehydratase (371 aa).

It belongs to the mannonate dehydratase family. Fe(2+) is required as a cofactor. The cofactor is Mn(2+).

The catalysed reaction is D-mannonate = 2-dehydro-3-deoxy-D-gluconate + H2O. It functions in the pathway carbohydrate metabolism; pentose and glucuronate interconversion. Catalyzes the dehydration of D-mannonate. The protein is Mannonate dehydratase of Geobacillus thermodenitrificans (strain NG80-2).